A 209-amino-acid chain; its full sequence is Eukaryotic translation initiation factor 4E (209 aa).

Residues 51-52, 97-98, and 153-158 contribute to the mRNA site; these read WH, WE, and RKQAYR.

Belongs to the eukaryotic initiation factor 4E family. In terms of assembly, eIF4F is a multi-subunit complex, the composition of which varies with external and internal environmental conditions. It is composed of at least eIF4A, eIF4E and eIF4G. eIF4E is also known to interact with other partners.

Recognizes and binds the 7-methylguanosine-containing mRNA cap during an early step in the initiation of protein synthesis and facilitates ribosome binding by inducing the unwinding of the mRNAs secondary structures. The protein is Eukaryotic translation initiation factor 4E (TIF45) of Candida albicans (strain SC5314 / ATCC MYA-2876) (Yeast).